We begin with the raw amino-acid sequence, 66 residues long: DNA gyrase inhibitor YacG (66 aa).

Positions 9, 12, 28, and 32 each coordinate Zn(2+). The disordered stretch occupies residues 45–66 (HKIAGAEESEDELYSGDLEPRH).

The protein belongs to the DNA gyrase inhibitor YacG family. As to quaternary structure, interacts with GyrB. The cofactor is Zn(2+).

Functionally, inhibits all the catalytic activities of DNA gyrase by preventing its interaction with DNA. Acts by binding directly to the C-terminal domain of GyrB, which probably disrupts DNA binding by the gyrase. The chain is DNA gyrase inhibitor YacG from Pseudomonas entomophila (strain L48).